Reading from the N-terminus, the 423-residue chain is Glucose-1-phosphate adenylyltransferase (423 aa).

Alpha-D-glucose 1-phosphate-binding positions include Tyr100, Gly165, 180–181 (EK), and Ser191.

Belongs to the bacterial/plant glucose-1-phosphate adenylyltransferase family. In terms of assembly, homotetramer.

The enzyme catalyses alpha-D-glucose 1-phosphate + ATP + H(+) = ADP-alpha-D-glucose + diphosphate. It functions in the pathway glycan biosynthesis; glycogen biosynthesis. Involved in the biosynthesis of ADP-glucose, a building block required for the elongation reactions to produce glycogen. Catalyzes the reaction between ATP and alpha-D-glucose 1-phosphate (G1P) to produce pyrophosphate and ADP-Glc. This Lachnospira eligens (strain ATCC 27750 / DSM 3376 / VPI C15-48 / C15-B4) (Eubacterium eligens) protein is Glucose-1-phosphate adenylyltransferase.